The chain runs to 264 residues: tRNA pseudouridine synthase A (264 aa).

The active-site Nucleophile is Asp51. Substrate is bound at residue Tyr109.

It belongs to the tRNA pseudouridine synthase TruA family. As to quaternary structure, homodimer.

The catalysed reaction is uridine(38/39/40) in tRNA = pseudouridine(38/39/40) in tRNA. Formation of pseudouridine at positions 38, 39 and 40 in the anticodon stem and loop of transfer RNAs. This Staphylococcus aureus (strain MRSA252) protein is tRNA pseudouridine synthase A.